The following is a 228-amino-acid chain: 7-cyano-7-deazaguanine synthase (228 aa).

11–21 provides a ligand contact to ATP; it reads LSGGLDSATCL. Residues Cys-191, Cys-201, Cys-204, and Cys-207 each coordinate Zn(2+).

The protein belongs to the QueC family. Zn(2+) is required as a cofactor.

The catalysed reaction is 7-carboxy-7-deazaguanine + NH4(+) + ATP = 7-cyano-7-deazaguanine + ADP + phosphate + H2O + H(+). It participates in purine metabolism; 7-cyano-7-deazaguanine biosynthesis. Functionally, catalyzes the ATP-dependent conversion of 7-carboxy-7-deazaguanine (CDG) to 7-cyano-7-deazaguanine (preQ(0)). This is 7-cyano-7-deazaguanine synthase from Azoarcus sp. (strain BH72).